A 286-amino-acid chain; its full sequence is Beta-lactamase TEM-12 (286 aa).

The signal sequence occupies residues 1 to 23 (MSIQHFRVALIPFFAAFCLPVFA). Ser-68 functions as the Acyl-ester intermediate in the catalytic mechanism. A disulfide bridge links Cys-75 with Cys-121. Residue Glu-166 is the Proton acceptor of the active site. Residue 232 to 234 (KSG) participates in substrate binding.

It belongs to the class-A beta-lactamase family.

It catalyses the reaction a beta-lactam + H2O = a substituted beta-amino acid. Its function is as follows. TEM-type are the most prevalent beta-lactamases in enterobacteria; they hydrolyze the beta-lactam bond in susceptible beta-lactam antibiotics, thus conferring resistance to penicillins and cephalosporins such as ceftazidime. The protein is Beta-lactamase TEM-12 (blaT-12b) of Klebsiella oxytoca.